A 66-amino-acid chain; its full sequence is Surface composition regulator (66 aa).

Belongs to the GlgS family.

Its function is as follows. Major determinant of cell surface composition. Negatively regulates motility, adhesion and synthesis of biofilm exopolysaccharides. The polypeptide is Surface composition regulator (Escherichia coli O127:H6 (strain E2348/69 / EPEC)).